A 455-amino-acid polypeptide reads, in one-letter code: T-box protein VegT-B (455 aa).

Residues 57 to 230 (LWTQFHQEGT…HNPFAKGFRE (174 aa)) constitute a DNA-binding region (T-box). Residues 229–241 (REQERSHKRDDVL) show a composition bias toward basic and acidic residues. Disordered regions lie at residues 229–276 (REQE…RIKE) and 295–350 (ANQG…RRLT). Polar residues predominate over residues 308 to 326 (GVNQEQQVPTSSSNFYIKS).

Forms a repression complex on the promoters of the nodal/nr1 and siamois genes with the maternal factors tcf7l1/tcf3 and pouf5.1/oct-25. Interacts (via C-terminus) with tcf7l1/tcf3 (via N-terminus). Also interacts with the other POU-domain transcription factors pou5f1.2/oct-91 and pou5f1.3/oct-60. In terms of tissue distribution, maternally localized to the vegetal hemisphere of oocytes. Zygotic expression parallels blastopore formation and shifts from dorsal expression in the marginal zone of late blastula and early gastrula stages to a ventral/lateral expression at later stages. During neurula and tailbud stages, expressed in the posterior and anterior ends of the embryo. During tailbud stages, expressed in a subset of interneurons in the neural tube.

It is found in the nucleus. Transcription factor required for both mesoderm and endoderm formation in the embryo; signaling determinants and concentration levels may determine which germ layer is formed. Acts together with beta-catenin to activate genes that are responsible for mesoderm induction including wnt-8, eomes t/bra, siamois, mix1 and sox17. Directly binds to promoter DNA. Patterns the mesoderm along the dorsoventral and posterior axis. Activates siamois gene transcription when alone or in combination with beta-catenin, but inhibits siamois transcription in combination with pou5f1.1/oct-25. This Xenopus laevis (African clawed frog) protein is T-box protein VegT-B (vegt-b).